A 138-amino-acid polypeptide reads, in one-letter code: MEEEEWSEEQQRFSYLQRLKAAVHYTVGCLCEEVASDKDMQFSKQTIAAISEVTFGQCENFAKDLEMFARHAKRSTINTEDVKLLARRSHSLLKYITEKNEDIAQLNLEKKAKKKKKLEDENRNSVESAEAGVEESEN.

Met-1 is modified (N-acetylmethionine). The tract at residues 112-138 (AKKKKKLEDENRNSVESAEAGVEESEN) is disordered.

The protein belongs to the TAF9 family. CENP-S/MHF1 subfamily. Heterodimer with CENPX, sometimes called MHF; this interaction stabilizes both partners. MHF heterodimers can assemble to form tetrameric structures. MHF also coassemble with CENPT-CENPW heterodimers at centromeres to form the tetrameric CENP-T-W-S-X complex. Forms a discrete complex with FANCM and CENPX, called FANCM-MHF; this interaction, probably mediated by direct binding between CENPS and FANCM, leads to synergistic activation of double-stranded DNA binding and strongly stimulates FANCM-mediated DNA remodeling. Recruited by FANCM to the Fanconi anemia (FA) core complex, which consists of CENPS, CENPX, FANCA, FANCB, FANCC, FANCE, FANCF, FANCG, FANCL, FANCM, FAAP24 and FAAP100. The FA core complex associates with Bloom syndrome (BLM) complex, which consists of at least BLM, DNA topoisomerase 3-alpha (TOP3A), RMI1/BLAP75, RPA1/RPA70 and RPA2/RPA32. The super complex between FA and BLM is called BRAFT. Component of the CENPA-CAD complex, composed of CENPI, CENPK, CENPL, CENPO, CENPP, CENPQ, CENPR and CENPS. The CENPA-CAD complex is probably recruited on centromeres by the CENPA-NAC complex, at least composed of CENPA, CENPC, CENPH, CENPM, CENPN, CENPT and CENPU.

The protein localises to the nucleus. The protein resides in the chromosome. Its subcellular location is the centromere. It is found in the kinetochore. Functionally, DNA-binding component of the Fanconi anemia (FA) core complex. Required for the normal activation of the FA pathway, leading to monoubiquitination of the FANCI-FANCD2 complex in response to DNA damage, cellular resistance to DNA cross-linking drugs, and prevention of chromosomal breakage. In complex with CENPX (MHF heterodimer), crucial cofactor for FANCM in both binding and ATP-dependent remodeling of DNA. Stabilizes FANCM. In complex with CENPX and FANCM (but not other FANC proteins), rapidly recruited to blocked forks and promotes gene conversion at blocked replication forks. In complex with CENPT, CENPW and CENPX (CENP-T-W-S-X heterotetramer), involved in the formation of a functional kinetochore outer plate, which is essential for kinetochore-microtubule attachment and faithful mitotic progression. As a component of MHF and CENP-T-W-S-X complexes, binds DNA and bends it to form a nucleosome-like structure. DNA-binding function is fulfilled in the presence of CENPX, with the following preference for DNA substates: Holliday junction &gt; double-stranded &gt; splay arm &gt; single-stranded. Does not bind DNA on its own. The chain is Centromere protein S (CENPS) from Bos taurus (Bovine).